We begin with the raw amino-acid sequence, 883 residues long: MNEQYSALRSNVSMLGKVLGETIKDALGEHILDRVETIRKLSKSSRAGNDADRQELLTTLQNLSNDELLPVARAFSQFLNLANTAEQYHSISPKGEAASNPEVIARTLRKLKNQPDLSEATIKKAVESLSLELVLTAHPTEITRRTLIHKMVEVNTCLKQLDNKDLADYERNQLMRRLRQLIAQSWHTDEIRKQRPSPVDEAKWGFAVVENSLWQGVPNYLRELNEQLEENLGFKLPVDFVPVRFTSWMGGDRDGNPNVTADITRHVLLLSRWKATDLFLKDIQVLVSELSMVEATPELLALVGEEGAAEPYRYLMKNLRSRLMTTQAWLEARLKGQKLPKPEGLLTQNEELWEPLYACYQSLQACGMGIIANGDLLDTLRRVKCFGVPLVRIDIRQESTRHTEALGELTRYLGIGDYESWSEADKQAFLIRELNSKRPLLPRNWQPSAETREVLDTCQVIAEAPQGSIAAYVISMAKTPSDVLAVHLLLKEAGIGFAMPVAPLFETLDDLNNANDVMTQLLNIDWYRGLIQGKQMVMIGYSDSAKDAGVMAASWAQYQAQDALIKTCEKAGIELTLFHGRGGSIGRGGAPAHAALLSQPPGSLKGGLRVTEQGEMIRFKYGLPEITVSSLSLYTGAILEANLLPPPEPKESWRRIMDELSVISCDVYRGYVRENKDFVPYFRSATPEQELGKLPLGSRPAKRRPTGGVESLRAIPWIFAWTQNRLMLPAWLGAGTALQKVVEDGKQSELETMCRDWPFFSTRLGMLEMVFAKADLWLAEYYDQRLVAKELWPLGKELRNLLEEDIKVVLAIANDSHLMADLPWIAESIQLRNIYTDPLNVLQAELLHRSRLTEQNGKEPDPRVEQALMVTIAGVAAGMRNTG.

Catalysis depends on residues H138 and K546.

It belongs to the PEPCase type 1 family. The cofactor is Mg(2+).

It catalyses the reaction oxaloacetate + phosphate = phosphoenolpyruvate + hydrogencarbonate. Functionally, forms oxaloacetate, a four-carbon dicarboxylic acid source for the tricarboxylic acid cycle. The sequence is that of Phosphoenolpyruvate carboxylase from Escherichia fergusonii (strain ATCC 35469 / DSM 13698 / CCUG 18766 / IAM 14443 / JCM 21226 / LMG 7866 / NBRC 102419 / NCTC 12128 / CDC 0568-73).